The following is a 356-amino-acid chain: Glutamine synthetase nodule isozyme (356 aa).

One can recognise a GS beta-grasp domain in the interval 19-99 (IIAEYIWIGG…VMCDAYTPAG (81 aa)). A disordered region spans residues 41-66 (PGPVSDPSKLPKWNYDGSSTGQAPGE). The GS catalytic domain maps to 106–356 (KRHNAAKIFS…IADTTILWKP (251 aa)).

The protein belongs to the glutamine synthetase family. In terms of assembly, homooctamer.

Its subcellular location is the cytoplasm. It carries out the reaction L-glutamate + NH4(+) + ATP = L-glutamine + ADP + phosphate + H(+). This is Glutamine synthetase nodule isozyme from Vigna aconitifolia (Moth bean).